The chain runs to 726 residues: Peroxisomal fatty acid beta-oxidation multifunctional protein (726 aa).

This sequence in the N-terminal section; belongs to the enoyl-CoA hydratase/isomerase family. The protein in the central section; belongs to the 3-hydroxyacyl-CoA dehydrogenase family. As to quaternary structure, monomer.

The protein localises to the peroxisome. Its subcellular location is the cytoplasm. It localises to the cytoskeleton. It carries out the reaction a (3S)-3-hydroxyacyl-CoA = a (2E)-enoyl-CoA + H2O. It catalyses the reaction a 4-saturated-(3S)-3-hydroxyacyl-CoA = a (3E)-enoyl-CoA + H2O. The enzyme catalyses a (3Z)-enoyl-CoA = a 4-saturated (2E)-enoyl-CoA. The catalysed reaction is a (3E)-enoyl-CoA = a 4-saturated (2E)-enoyl-CoA. It carries out the reaction (3S)-3-hydroxybutanoyl-CoA = (3R)-3-hydroxybutanoyl-CoA. It catalyses the reaction a (3S)-3-hydroxyacyl-CoA + NAD(+) = a 3-oxoacyl-CoA + NADH + H(+). It functions in the pathway lipid metabolism; fatty acid beta-oxidation. In terms of biological role, multifunctional enzyme involved in fatty acid beta-oxidation. Also binds to RNA and microtubules. Possible role in subcellular mRNA localization and RNA-cytoskeleton interactions. The polypeptide is Peroxisomal fatty acid beta-oxidation multifunctional protein (MFP) (Oryza sativa subsp. japonica (Rice)).